Here is a 502-residue protein sequence, read N- to C-terminus: Tubulin gamma chain (502 aa).

A compositionally biased stretch (polar residues) spans 51-68 (ELNNSGSSPQSYPQQTKP). Residues 51–73 (ELNNSGSSPQSYPQQTKPNGKYR) are disordered. Residue 169–175 (AGGTGSG) coordinates GTP. Residues 473 to 482 (DDEDDLEDGD) show a composition bias toward acidic residues. Positions 473–502 (DDEDDLEDGDGGGGGNGNGYNNIDDADMGI) are disordered.

The protein belongs to the tubulin family.

Its subcellular location is the cytoplasm. It is found in the cytoskeleton. The protein resides in the microtubule organizing center. The protein localises to the spindle pole body. Functionally, tubulin is the major constituent of microtubules. The gamma chain is found at microtubule organizing centers (MTOC) such as the spindle poles or the centrosome, suggesting that it is involved in the minus-end nucleation of microtubule assembly. In Candida albicans (Yeast), this protein is Tubulin gamma chain (TUB4).